The sequence spans 95 residues: Progonadoliberin-1 (95 aa).

An N-terminal signal peptide occupies residues Met1 to Cys25. Gln26 carries the pyrrolidone carboxylic acid modification. Gly35 is subject to Glycine amide.

This sequence belongs to the GnRH family.

It localises to the secreted. Its function is as follows. Stimulates the secretion of gonadotropins. This chain is Progonadoliberin-1 (gnrh1), found in Sparus aurata (Gilthead sea bream).